Here is a 218-residue protein sequence, read N- to C-terminus: Ropporin-1-like protein (218 aa).

The RIIa domain maps to proline 17–proline 54.

Belongs to the ropporin family. In terms of assembly, component of the axonemal radial spoke complex 1 (RS1), at least composed of spoke head proteins RSPH1, RSPH3, RSPH9 and the cilia-specific component RSPH4A or sperm-specific component RSPH6A, spoke stalk proteins RSPH14, DNAJB13, DYDC1, ROPN1L and NME5, and the anchor protein IQUB. May interact with AKAP3. Interacts with FSCB; the interaction increases upon spermatozoa capacitation conditions. Interacts with CFAP61. Sumoylated, sumoylation decreases upon spermatozoa capacitation conditions. In terms of tissue distribution, testis-specific. Expression is restricted to germ cells.

The protein resides in the cell projection. It localises to the cilium. Its subcellular location is the flagellum. Its function is as follows. Functions as part of axonemal radial spoke complexes that play an important part in the motility of sperm and cilia. Important for male fertility. With ROPN1, involved in fibrous sheath integrity and sperm motility, plays a role in PKA-dependent signaling processes required for spermatozoa capacitation. This is Ropporin-1-like protein (Ropn1l) from Mus musculus (Mouse).